The primary structure comprises 270 residues: MKQLSNLFDMKKNSEKITMVTSYDYPSAKQAEAAEIDTILVGDSLGMTVLGYDSTVQVTLNDMIHHGKAVRRGAPNTFVVVDLPIGTVGISDEKDLENALRLYQETKANAVKAEGAHLISFITKASAMGIPVVSHLGLTPQSVGIMGYKMQGSTKEAAKQLISDAEAVQEAGAVMLVLEAVPSDLAALISERLDIPVIGIGAGKGTDGQVLVYHDMLNYGQEHRAKFVKQYGDFSNGIEALQQYHKEVREGDFPSEAYTYKKQILEELDK.

Residues D43 and D82 each contribute to the Mg(2+) site. Residues 43-44 (DS), D82, and K112 each bind 3-methyl-2-oxobutanoate. E114 contributes to the Mg(2+) binding site. Residue E179 is the Proton acceptor of the active site.

The protein belongs to the PanB family. As to quaternary structure, homodecamer; pentamer of dimers. It depends on Mg(2+) as a cofactor.

It is found in the cytoplasm. It catalyses the reaction 3-methyl-2-oxobutanoate + (6R)-5,10-methylene-5,6,7,8-tetrahydrofolate + H2O = 2-dehydropantoate + (6S)-5,6,7,8-tetrahydrofolate. It participates in cofactor biosynthesis; (R)-pantothenate biosynthesis; (R)-pantoate from 3-methyl-2-oxobutanoate: step 1/2. Its function is as follows. Catalyzes the reversible reaction in which hydroxymethyl group from 5,10-methylenetetrahydrofolate is transferred onto alpha-ketoisovalerate to form ketopantoate. The polypeptide is 3-methyl-2-oxobutanoate hydroxymethyltransferase (Staphylococcus carnosus (strain TM300)).